The primary structure comprises 333 residues: T-cell surface glycoprotein CD1b (333 aa).

Positions 1 to 17 (MLLLPFQLLAVLFPGGN) are cleaved as a signal peptide. Over 18–303 (SEHAFQGPTS…YWRNPTSIGS (286 aa)) the chain is Extracellular. N-linked (GlcNAc...) asparagine glycans are attached at residues Asn-38, Asn-75, and Asn-146. 3 disulfide bridges follow: Cys-120–Cys-184, Cys-149–Cys-163, and Cys-224–Cys-279. In terms of domain architecture, Ig-like spans 185 to 295 (PRYLLGVLNA…LEGQDIILYW (111 aa)). N-linked (GlcNAc...) asparagine glycosylation occurs at Asn-258. Residues 304–324 (IVLAIIVPSLLLLLCLALWYM) form a helical membrane-spanning segment. Over 325 to 333 (RRRSYQNIP) the chain is Cytoplasmic. The short motif at 329-332 (YQNI) is the Internalization signal element.

As to quaternary structure, heterodimer with B2M (beta-2-microglobulin). Interacts with saposin C. In terms of tissue distribution, expressed on cortical thymocytes, on certain T-cell leukemias, and in various other tissues.

The protein resides in the cell membrane. The protein localises to the endosome membrane. It is found in the lysosome membrane. Functionally, antigen-presenting protein that binds self and non-self lipid and glycolipid antigens and presents them to T-cell receptors on natural killer T-cells. The chain is T-cell surface glycoprotein CD1b (CD1B) from Homo sapiens (Human).